The chain runs to 437 residues: Amino-acid acetyltransferase (437 aa).

Residues 289-429 (ENIRLATSFD…EHYNYQRMSK (141 aa)) form the N-acetyltransferase domain.

The protein belongs to the acetyltransferase family. ArgA subfamily.

It localises to the cytoplasm. It carries out the reaction L-glutamate + acetyl-CoA = N-acetyl-L-glutamate + CoA + H(+). Its pathway is amino-acid biosynthesis; L-arginine biosynthesis; N(2)-acetyl-L-ornithine from L-glutamate: step 1/4. This chain is Amino-acid acetyltransferase, found in Actinobacillus pleuropneumoniae serotype 7 (strain AP76).